Consider the following 197-residue polypeptide: MAKVLVLKSSILGDYSQSAKLIDHLQQHWQGQGAEVTVRDLAAQPLPVLDGEIAMGLRGGDELSPRQQEVLALSDELVAELKAHDTLVIAAPMYNFSIPTQLKNWIDLVARAGVTFTYTETGPKGLVEGKRAVLVTTRGGVHKNGASDHVVPYLKTVLGFIGIDEVETVYGEALNMGPEANEQGISQAKQSIEQLVA.

FMN contacts are provided by residues S10, 16–18, 93–96, and 137–140; these read SQS, MYNF, and TRGG.

This sequence belongs to the azoreductase type 1 family. In terms of assembly, homodimer. Requires FMN as cofactor.

It carries out the reaction 2 a quinone + NADH + H(+) = 2 a 1,4-benzosemiquinone + NAD(+). It catalyses the reaction N,N-dimethyl-1,4-phenylenediamine + anthranilate + 2 NAD(+) = 2-(4-dimethylaminophenyl)diazenylbenzoate + 2 NADH + 2 H(+). In terms of biological role, quinone reductase that provides resistance to thiol-specific stress caused by electrophilic quinones. Functionally, also exhibits azoreductase activity. Catalyzes the reductive cleavage of the azo bond in aromatic azo compounds to the corresponding amines. In Shewanella loihica (strain ATCC BAA-1088 / PV-4), this protein is FMN-dependent NADH:quinone oxidoreductase.